Consider the following 200-residue polypeptide: Large ribosomal subunit protein uL4 (200 aa).

Positions 38 to 72 (GRQGTKQQKTRSDVAGGGKRPWRQKGTGRARAGTT) are disordered.

It belongs to the universal ribosomal protein uL4 family. In terms of assembly, part of the 50S ribosomal subunit.

Its function is as follows. One of the primary rRNA binding proteins, this protein initially binds near the 5'-end of the 23S rRNA. It is important during the early stages of 50S assembly. It makes multiple contacts with different domains of the 23S rRNA in the assembled 50S subunit and ribosome. Functionally, forms part of the polypeptide exit tunnel. The polypeptide is Large ribosomal subunit protein uL4 (Pseudomonas entomophila (strain L48)).